The sequence spans 404 residues: AT-hook motif nuclear-localized protein 3 (404 aa).

Disordered stretches follow at residues 1–51 (MEER…VPPT), 70–100 (PFSL…PDGT), and 113–133 (SVPL…GKSN). A compositionally biased stretch (polar residues) spans 7–19 (TNINNNITSSFGL). The segment covering 35-51 (DPPPRPENPNPFLVPPT) has biased composition (pro residues). Residues 71–83 (FSLTMPTENTSAE) show a composition bias toward polar residues. The short motif at 86 to 94 (KKKRGRPRK) is the Bipartite nuclear localization signal element. The segment at residues 86-98 (KKKRGRPRKYNPD) is a DNA-binding region (a.T hook). Residues 123–133 (RKRGRGRGKSN) show a composition bias toward basic residues. The region spanning 163 to 308 (GANFTPHVLI…RFGAQPSSIS (146 aa)) is the PPC domain. The segment at 359 to 404 (PFSSIPVGGGGGGEVGEEEGEEDDDELEGEDEEFGGDSQSDNEIPS) is disordered. Acidic residues predominate over residues 373-393 (VGEEEGEEDDDELEGEDEEFG).

In terms of assembly, homodimer. Interacts with AHL4. In terms of tissue distribution, expressed in both procambium and xylem precursors of the root meristem. Also detected in the endodermis in the late elongation zone and onwards.

The protein localises to the nucleus. Functionally, transcription factor that specifically binds AT-rich DNA sequences related to the nuclear matrix attachment regions (MARs). Acts redundantly with AHL4 to regulate the formation of tissue boundary between the xylem and procambium in the root meristem. The protein is AT-hook motif nuclear-localized protein 3 of Arabidopsis thaliana (Mouse-ear cress).